A 278-amino-acid chain; its full sequence is 4-hydroxy-tetrahydrodipicolinate reductase (278 aa).

NAD(+)-binding positions include 13-18 and 111-113; these read GAAGKM and GTT. The Proton donor/acceptor role is filled by H167. H168 contributes to the (S)-2,3,4,5-tetrahydrodipicolinate binding site. The active-site Proton donor is K171. 177 to 178 provides a ligand contact to (S)-2,3,4,5-tetrahydrodipicolinate; the sequence is GT.

Belongs to the DapB family.

Its subcellular location is the cytoplasm. It carries out the reaction (S)-2,3,4,5-tetrahydrodipicolinate + NAD(+) + H2O = (2S,4S)-4-hydroxy-2,3,4,5-tetrahydrodipicolinate + NADH + H(+). It catalyses the reaction (S)-2,3,4,5-tetrahydrodipicolinate + NADP(+) + H2O = (2S,4S)-4-hydroxy-2,3,4,5-tetrahydrodipicolinate + NADPH + H(+). Its pathway is amino-acid biosynthesis; L-lysine biosynthesis via DAP pathway; (S)-tetrahydrodipicolinate from L-aspartate: step 4/4. Catalyzes the conversion of 4-hydroxy-tetrahydrodipicolinate (HTPA) to tetrahydrodipicolinate. The chain is 4-hydroxy-tetrahydrodipicolinate reductase from Nostoc sp. (strain PCC 7120 / SAG 25.82 / UTEX 2576).